Reading from the N-terminus, the 1100-residue chain is Collagen alpha-2(I) chain (1100 aa).

Residues 1–982 (QYDGVKAPDP…PGPAGGGYDV (982 aa)) form a disordered region. Low complexity-rich tracts occupy residues 122-170 (EPGA…AAGP), 200-209 (EPGPNGAVGP), and 216-237 (PGNN…AGAP). Positions 239–249 (FPGPRGGPGPQ) are enriched in pro residues. Over residues 251 to 261 (PQGAAGQRGLA) the composition is skewed to low complexity. The segment covering 268–277 (GVKGDGGPKG) has biased composition (gly residues). 4 stretches are compositionally biased toward low complexity: residues 333-352 (MPGA…PGDA), 358-385 (SGPA…AGPA), 435-448 (APGP…TGAT), and 460-472 (QGAS…QGLP). A compositionally biased stretch (gly residues) spans 473–482 (GPAGGAGEAG). A compositionally biased stretch (low complexity) spans 507-517 (NPGAAGASGPQ). A compositionally biased stretch (gly residues) spans 530-557 (GTDGGKGEPGAAGAAGGPGHQGPGGMPG). The segment covering 568 to 579 (KGEKGEGGHRGP) has biased composition (basic and acidic residues). Residues 633–646 (PAGAPGFAGPPGAD) show a composition bias toward low complexity. The span at 656-665 (GPSGGKGESG) shows a compositional bias: gly residues. Low complexity-rich tracts occupy residues 666–691 (PSGP…TGAR), 702–729 (FPGA…PAGK), and 757–775 (SGEK…LGLQ). The span at 788–797 (GSPGGAGAVG) shows a compositional bias: gly residues. Composition is skewed to low complexity over residues 798–820 (EAGR…LGLP) and 854–866 (AGPT…PGNR). Residues 867 to 876 (GESGPGGAAG) show a composition bias toward gly residues. Positions 877 to 892 (AVGPAGARGAAGPSGP) are enriched in low complexity. Basic and acidic residues predominate over residues 893–907 (RGEKGVAGEKGERGM). Low complexity predominate over residues 916–935 (LQGMPGPSGPSGDTGSAGPN). Positions 1071–1100 (TRLPLLDLAPLDLGGADQEFGLDLGPVCFK) constitute a Fibrillar collagen NC1 domain.

This sequence belongs to the fibrillar collagen family.

The protein localises to the secreted. It localises to the extracellular space. The protein resides in the extracellular matrix. The protein is Collagen alpha-2(I) chain of Epinephelus caninus (Dogtooth grouper).